We begin with the raw amino-acid sequence, 979 residues long: Peptidyl-glycine alpha-amidating monooxygenase (979 aa).

The first 24 residues, 1–24 (MAGRARSRLLLLLGLLALQSSCLA), serve as a signal peptide directing secretion. Positions 1 to 497 (MAGRARSRLL…EGPWEPELAG (497 aa)) are peptidylglycine alpha-hydroxylating monooxygenase. Residues 25–34 (FRSPLSVFKR) constitute a propeptide that is removed on maturation. Topologically, residues 35–869 (FKETTRSFSN…KKLIKDPGSG (835 aa)) are intragranular. Cystine bridges form between Cys-46–Cys-185, Cys-80–Cys-125, Cys-113–Cys-130, Cys-226–Cys-333, and Cys-292–Cys-314. 2 residues coordinate Cu(2+): His-106 and His-107. Cu(2+) is bound by residues His-171, His-241, His-243, and Met-313. The peptidyl-alpha-hydroxyglycine alpha-amidating lyase stretch occupies residues 498-823 (DFHVEEALEW…SRLEVEHRSV (326 aa)). NHL repeat units lie at residues 501–544 (VEEA…NSFD), 570–611 (AEIL…LEPR), 620–665 (LGRS…FSPS), and 673–717 (GEES…FKTD). Val-520 contributes to the Ca(2+) binding site. Arg-533 is a binding site for a protein. His-585 lines the Zn(2+) pocket. Leu-587 lines the Ca(2+) pocket. A disulfide bridge connects residues Cys-634 and Cys-655. Tyr-654 lines the a protein pocket. Residue His-690 coordinates Zn(2+). An intrachain disulfide couples Cys-702 to Cys-713. Residue Arg-706 participates in a protein binding. A glycan (N-linked (GlcNAc...) asparagine) is linked at Asn-765. An NHL 5 repeat occupies 769 to 812 (GEIIDVFKPVRKHFDMPHDIVASEDGTVYIGDAHTNTVWKFTLT). Position 786 (His-786) interacts with Zn(2+). Asp-787 serves as a coordination point for Ca(2+). A helical membrane pass occupies residues 870–893 (VPVVLITTLLVIPVVVLLAIAMFI). Residues 894 to 979 (RWKKSRAFGD…APLPTPAPSS (86 aa)) are Cytoplasmic-facing. Residues Ser-924, Ser-925, Ser-935, and Ser-948 each carry the phosphoserine modification. Residues 931-948 (NFFASRKGYSRKGFDRVS) form an interaction with RASSF9 region. The disordered stretch occupies residues 943-979 (GFDRVSTEGSDQEKDEDDGSESEEEYSAPLPTPAPSS). Thr-949 bears the Phosphothreonine mark. Ser-952 is modified (phosphoserine; by UHMK1). Positions 955–968 (EKDEDDGSESEEEY) are enriched in acidic residues. Ser-964 is modified (phosphoserine).

The protein in the C-terminal section; belongs to the peptidyl-alpha-hydroxyglycine alpha-amidating lyase family. It in the N-terminal section; belongs to the copper type II ascorbate-dependent monooxygenase family. As to quaternary structure, monomer. Interacts with RASSF9. It depends on Zn(2+) as a cofactor. Cu(2+) is required as a cofactor.

It is found in the cytoplasmic vesicle. It localises to the secretory vesicle membrane. It catalyses the reaction a [peptide]-C-terminal glycine + 2 L-ascorbate + O2 = a [peptide]-C-terminal (2S)-2-hydroxyglycine + 2 monodehydro-L-ascorbate radical + H2O. The catalysed reaction is a [peptide]-C-terminal (2S)-2-hydroxyglycine = a [peptide]-C-terminal amide + glyoxylate. It carries out the reaction N-dodecanoylglycine + 2 L-ascorbate + O2 = N-dodecanoyl-(2S)-hydroxyglycine + 2 monodehydro-L-ascorbate radical + H2O. The enzyme catalyses N-dodecanoyl-(2S)-hydroxyglycine = dodecanamide + glyoxylate. It catalyses the reaction N-(9Z,12Z,15Z)-octadecatrienoylglycine + 2 L-ascorbate + O2 = N-(9Z,12Z,15Z)-octadecatrienoyl-(2S)-hydroxyglycine + 2 monodehydro-L-ascorbate radical + H2O. The catalysed reaction is N-(9Z,12Z,15Z)-octadecatrienoyl-(2S)-hydroxyglycine = (9Z,12Z,15Z)-octadecatrienamide + glyoxylate. It carries out the reaction N-(9Z-octadecenoyl)glycine + 2 L-ascorbate + O2 = N-(9Z-octadecenoyl)-(2S)-hydroxyglycine + 2 monodehydro-L-ascorbate radical + H2O. The enzyme catalyses N-(9Z-octadecenoyl)-(2S)-hydroxyglycine = (9Z)-octadecenamide + glyoxylate. It catalyses the reaction N-tetradecanoylglycine + 2 L-ascorbate + O2 = N-tetradecanoyl-(2S)-hydroxyglycine + 2 monodehydro-L-ascorbate radical + H2O. The catalysed reaction is N-tetradecanoyl-(2S)-hydroxyglycine = tetradecamide + glyoxylate. It carries out the reaction N-decanoylglycine + 2 L-ascorbate + O2 = N-decanoyl-(2S)-hydroxyglycine + 2 monodehydro-L-ascorbate radical + H2O. The enzyme catalyses N-decanoyl-(2S)-hydroxyglycine = decanamide + glyoxylate. It catalyses the reaction N-octanoylglycine + 2 L-ascorbate + O2 = N-octanoyl-(2S)-hydroxyglycine + 2 monodehydro-L-ascorbate radical + H2O. The catalysed reaction is N-octanoyl-(2S)-hydroxyglycine = octanamide + glyoxylate. PAM activity is inhibited by EDTA, phenylglyoxal and diethyl pyrocarbonate. PAL activity is stimulated by cadmium and inhibited by mercury. Bifunctional enzyme that catalyzes amidation of the C-terminus of proteins. Alpha-amidation is present at the C-terminus of many endocrine hormones and neuropeptides and is required for their activity. C-terminal amidation also takes place in response to protein fragmentation triggered by oxidative stress, promoting degradation of amidated protein fragments by the proteasome. Alpha-amidation involves two sequential reactions, both of which are catalyzed by separate catalytic domains of the enzyme. The first step, catalyzed by peptidyl alpha-hydroxylating monooxygenase (PHM) domain, is the copper-, ascorbate-, and O2- dependent stereospecific hydroxylation (with S stereochemistry) at the alpha-carbon (C-alpha) of the C-terminal glycine of the peptidylglycine substrate. The second step, catalyzed by the peptidylglycine amidoglycolate lyase (PAL) domain, is the zinc-dependent cleavage of the N-C-alpha bond, producing the alpha-amidated peptide and glyoxylate. Similarly, catalyzes the two-step conversion of an N-fatty acylglycine to a primary fatty acid amide and glyoxylate. The protein is Peptidyl-glycine alpha-amidating monooxygenase of Mus musculus (Mouse).